The primary structure comprises 466 residues: Histidinol dehydrogenase, chloroplastic (466 aa).

Residues 1–30 constitute a chloroplast transit peptide; the sequence is MSLNLSRLSLLSSPRISISTHAPRKGYVCC. NAD(+)-binding residues include Tyr-155, Gln-217, and Asn-240. Substrate is bound by residues Ser-266, Gln-288, and His-291. Zn(2+) contacts are provided by Gln-288 and His-291. Active-site proton acceptor residues include Glu-356 and His-357. Residues His-357, Asp-390, Glu-444, and His-449 each coordinate substrate. A Zn(2+)-binding site is contributed by Asp-390. His-449 is a Zn(2+) binding site.

Belongs to the histidinol dehydrogenase family. The cofactor is Zn(2+).

The protein resides in the plastid. It localises to the chloroplast. The enzyme catalyses L-histidinol + 2 NAD(+) + H2O = L-histidine + 2 NADH + 3 H(+). It participates in amino-acid biosynthesis; L-histidine biosynthesis; L-histidine from 5-phospho-alpha-D-ribose 1-diphosphate: step 9/9. Catalyzes the sequential NAD-dependent oxidations of L-histidinol to L-histidinaldehyde and then to L-histidine. The chain is Histidinol dehydrogenase, chloroplastic (HISN8) from Arabidopsis thaliana (Mouse-ear cress).